A 363-amino-acid polypeptide reads, in one-letter code: 3-isopropylmalate dehydrogenase (363 aa).

NAD(+) is bound at residue 79 to 92; it reads GPKWEHLPPNDQPE. Substrate-binding residues include arginine 100, arginine 110, arginine 139, and aspartate 228. Residues aspartate 228, aspartate 252, and aspartate 256 each contribute to the Mg(2+) site. Position 286–298 (286–298) interacts with NAD(+); it reads GSAPDIAGKNIAN.

The protein belongs to the isocitrate and isopropylmalate dehydrogenases family. LeuB type 1 subfamily. In terms of assembly, homodimer. Mg(2+) is required as a cofactor. It depends on Mn(2+) as a cofactor.

Its subcellular location is the cytoplasm. The catalysed reaction is (2R,3S)-3-isopropylmalate + NAD(+) = 4-methyl-2-oxopentanoate + CO2 + NADH. Its pathway is amino-acid biosynthesis; L-leucine biosynthesis; L-leucine from 3-methyl-2-oxobutanoate: step 3/4. Catalyzes the oxidation of 3-carboxy-2-hydroxy-4-methylpentanoate (3-isopropylmalate) to 3-carboxy-4-methyl-2-oxopentanoate. The product decarboxylates to 4-methyl-2 oxopentanoate. The chain is 3-isopropylmalate dehydrogenase from Vibrio vulnificus (strain YJ016).